The following is a 980-amino-acid chain: Zinc finger BED domain-containing protein 6 (980 aa).

Positions 1–89 (MSVCTLSVPV…ILAKKFSKDL (89 aa)) are required for nucleolar localization. Positions 89 to 109 (LGSGRPVADAPASLASGAPEQ) are disordered. The BED-type 1 zinc-finger motif lies at 130–187 (AKTSIVWHFFHVDPQYTWRAICNLCEKSVSRGKPGSHLGTSTLQRHLQARHSPHWTRA). Positions 151, 154, 175, and 180 each coordinate Zn(2+). The disordered stretch occupies residues 201–239 (LDLSLSPPSPGSNGSFEYIPTDSVDENRMGKKRDKSASD). Positions 203–215 (LSLSPPSPGSNGS) are enriched in low complexity. The BED-type 2 zinc finger occupies 265-322 (AKTSAVWNFFYTDPQHISRAVCNICKRSVSRGRPGSHLGTSTLQRHLQATHPIHWAVA). Residues C286, C289, H310, and H315 each coordinate Zn(2+). Residues 328–397 (AIGNGLDETE…ADQDNPVHAQ (70 aa)) form a disordered region. The span at 360–373 (TAEDLSDSDTDEPP) shows a compositional bias: acidic residues. The residue at position 383 (S383) is a Phosphoserine. Positions 868–950 (VVDEYFKEKY…EQLIFLKMNL (83 aa)) are HATC (Hobo-Ac-Tam3) domain.

In terms of tissue distribution, expressed in pancreatic islet cells and weakly expressed in surrounding exocrine tissues (at protein level). Expressed in muscle and brain (at protein level). Shows broad tissue distribution with expression detected in brain, stomach, intestine, heart, kidney, liver, lung, skeletal muscle, ovary, spleen, tail and testis.

It localises to the nucleus. The protein resides in the nucleolus. It is found in the cytoplasm. Functionally, transcriptional repressor which binds to the consensus sequence 5'-GCTCGC-3', transcription regulation may be tissue-specific. Regulates the expression of target genes such as: IGF2, PGAP6/TMEM8, ENHO, and PIANP. Acts as a transcriptional repressor of growth factor IGF2, thereby negatively regulating postnatal growth of muscles and internal organs, especially in females. Negatively regulates myoblast differentiation and myoblast mitochondrial activity via its regulation of IGF2 transcription. Negatively regulates the cell cycle of myoblasts, potentially via transcriptional regulation of the E2F family of transcription factors such as: E2F1 and E2F2. Positively regulates the cell cycle and survival of pancreatic beta cells. Binds to the CDH2 gene and may directly repress CDH2 transcription. Probably by controlling CDH2 expression, regulates pancreatic beta cell adhesion, and formation of cell-to-cell junctions between pancreatic beta cells and neural crest stem cells. May also play a role in embryonic beta cell differentiation. May play a role in insulin sensitivity and glucose clearance. The protein is Zinc finger BED domain-containing protein 6 of Mus musculus (Mouse).